Reading from the N-terminus, the 339-residue chain is DNA-directed RNA polymerase subunit alpha (339 aa).

Residues methionine 1 to aspartate 238 are alpha N-terminal domain (alpha-NTD). The alpha C-terminal domain (alpha-CTD) stretch occupies residues leucine 255–valine 339.

It belongs to the RNA polymerase alpha chain family. As to quaternary structure, homodimer. The RNAP catalytic core consists of 2 alpha, 1 beta, 1 beta' and 1 omega subunit. When a sigma factor is associated with the core the holoenzyme is formed, which can initiate transcription.

The catalysed reaction is RNA(n) + a ribonucleoside 5'-triphosphate = RNA(n+1) + diphosphate. In terms of biological role, DNA-dependent RNA polymerase catalyzes the transcription of DNA into RNA using the four ribonucleoside triphosphates as substrates. This chain is DNA-directed RNA polymerase subunit alpha, found in Anaeromyxobacter sp. (strain Fw109-5).